The chain runs to 414 residues: NFATC2-interacting protein (414 aa).

The segment at 1 to 42 (MAEPLRRRGPRSRGGRASRGARRARAARGRCPRAPRSPTRLI) is disordered. Basic residues predominate over residues 7-33 (RRGPRSRGGRASRGARRARAARGRCPR). Phosphoserine is present on residues S52 and S54. The interval 63-118 (ADPGEVPVARLPAPAAPEQDSDSDSEGAAEGPAGAPRTLVRRRRRLLDPGEAPVVP) is disordered. The span at 68–79 (VPVARLPAPAAP) shows a compositional bias: low complexity. Phosphoserine is present on residues S83, S85, and S87. Over residues 90 to 100 (AAEGPAGAPRT) the composition is skewed to low complexity. Position 121 is a phosphoserine (S121). K123 is covalently cross-linked (Glycyl lysine isopeptide (Lys-Gly) (interchain with G-Cter in SUMO2)). Residues 139 to 208 (KLCPSEPEDE…SSRNKSRKHT (70 aa)) form a disordered region. A coiled-coil region spans residues 170 to 229 (KKKLRKKHEKEEKKMEEFPDQDISPLPQPSSRNKSRKHTEALQKLREVNKRLQDLRSCLS). S193, S199, and S309 each carry phosphoserine. Phosphothreonine occurs at positions 311 and 313. In terms of domain architecture, Ubiquitin-like spans 343–414 (LRLRVQGKEK…ESGDLIEVWG (72 aa)). A phosphoserine mark is found at S364 and S385.

In terms of assembly, interacts with NFATC2, TRAF1, TRAF2 and PRMT1. Interacts with UBE2I/UBC9. Methylation at the N-terminus by PRMT1 modulates interaction with the NFAT complex and results in augmented cytokine production.

The protein localises to the nucleus. The protein resides in the cytoplasm. In terms of biological role, in T-helper 2 (Th2) cells, regulates the magnitude of NFAT-driven transcription of a specific subset of cytokine genes, including IL3, IL4, IL5 and IL13, but not IL2. Recruits PRMT1 to the IL4 promoter; this leads to enhancement of histone H4 'Arg-3'-methylation and facilitates subsequent histone acetylation at the IL4 locus, thus promotes robust cytokine expression. Down-regulates formation of poly-SUMO chains by UBE2I/UBC9. In Rattus norvegicus (Rat), this protein is NFATC2-interacting protein (Nfatc2ip).